The chain runs to 571 residues: Urease subunit alpha (571 aa).

Positions 134-571 constitute a Urease domain; the sequence is GAIDTHIHFI…LPMAQRYFLF (438 aa). 3 residues coordinate Ni(2+): His-139, His-141, and Lys-222. Lys-222 is subject to N6-carboxylysine. Position 224 (His-224) interacts with substrate. Residues His-251 and His-277 each coordinate Ni(2+). His-325 functions as the Proton donor in the catalytic mechanism. Asp-365 serves as a coordination point for Ni(2+).

It belongs to the metallo-dependent hydrolases superfamily. Urease alpha subunit family. In terms of assembly, heterotrimer of UreA (gamma), UreB (beta) and UreC (alpha) subunits. Three heterotrimers associate to form the active enzyme. It depends on Ni cation as a cofactor. Carboxylation allows a single lysine to coordinate two nickel ions.

Its subcellular location is the cytoplasm. It catalyses the reaction urea + 2 H2O + H(+) = hydrogencarbonate + 2 NH4(+). The protein operates within nitrogen metabolism; urea degradation; CO(2) and NH(3) from urea (urease route): step 1/1. In Bordetella parapertussis (strain 12822 / ATCC BAA-587 / NCTC 13253), this protein is Urease subunit alpha.